Reading from the N-terminus, the 118-residue chain is Urease subunit beta (118 aa).

This sequence belongs to the urease beta subunit family. As to quaternary structure, heterotrimer of UreA (gamma), UreB (beta) and UreC (alpha) subunits. Three heterotrimers associate to form the active enzyme.

It localises to the cytoplasm. The catalysed reaction is urea + 2 H2O + H(+) = hydrogencarbonate + 2 NH4(+). It functions in the pathway nitrogen metabolism; urea degradation; CO(2) and NH(3) from urea (urease route): step 1/1. The sequence is that of Urease subunit beta from Aliivibrio fischeri (strain MJ11) (Vibrio fischeri).